The sequence spans 20 residues: Blooming-related protein 2 (20 aa).

The segment at 1-20 (VSAEYLERQGPKDDXDCFDD) is disordered.

Possible 'checkpoint' protein for cell division in the blooming process. This chain is Blooming-related protein 2, found in Prorocentrum triestinum (Red tide alga).